A 64-amino-acid polypeptide reads, in one-letter code: MTCKTCPFETCANSEYCPAGNDICYQKKWNDHREEMIERGCVANCPQMESHHTSLLCCRRDNCN.

Cystine bridges form between C3–C24, C6–C11, C17–C41, C45–C57, and C58–C63.

As to expression, expressed by the venom gland.

The protein resides in the secreted. Functionally, produces peripheral paralysis by blocking neuromuscular transmission at the postsynaptic site. Binds to the muscular nicotinic acetylcholine receptor (nAChR). The sequence is that of Frontoxin IV from Micrurus frontalis (Coral snake).